The chain runs to 286 residues: Master replication protein (286 aa).

The region spanning 2–96 (ARQVICWCFT…VEGPWEFGEF (95 aa)) is the CRESS-DNA virus Rep endonuclease domain. Positions 9–12 (CFTL) match the RCR-1 motif. A divalent metal cation contacts are provided by E33 and H41. The RCR-2 motif lies at 41-43 (HYQ). Positions 50–70 (KRTSLVQMKKLLPGAHLEKRR) match the Nuclear localization signal motif. Y79 (for DNA cleavage activity) is an active-site residue. Positions 79–82 (YAMK) match the RCR-3 motif. An a divalent metal cation-binding site is contributed by D84. The Nuclear localization signal signature appears at 96-102 (FKEVLED). 180 to 188 (GPQGGEGKT) is an ATP binding site.

The protein belongs to the nanoviridea/circoviridae replication-associated protein family. In terms of assembly, homooligomer (Potential). Rep binds to repeated DNA motifs (iterons). Requires Mg(2+) as cofactor. It depends on Mn(2+) as a cofactor.

The protein localises to the host nucleus. It carries out the reaction ATP + H2O = ADP + phosphate + H(+). Essential for the replication of all genomic viral ssDNA (trans-replication). The closed circular ssDNA genome is first converted to a superhelical dsDNA. Rep binds a specific hairpin at the genome origin of replication. Introduces an endonucleolytic nick within the conserved sequence 5'-A[GT]TATTAC-3' in the intergenic region of the genome, thereby initiating the rolling circle replication (RCR). Following cleavage, binds covalently to the 5'-phosphate of DNA as a tyrosyl ester. The cleavage gives rise to a free 3'-OH that serves as a primer for the cellular DNA polymerase. The polymerase synthesizes the (+) strand DNA by rolling circle mechanism. After one round of replication, a Rep-catalyzed nucleotidyl transfer reaction releases a circular single-stranded virus genome, thereby terminating the replication. Displays origin-specific DNA cleavage, nucleotidyl transferase, ATPase and helicase activities. The protein is Master replication protein (DNA-R) of Subterranean clover stunt virus (strain F) (SCSV).